Consider the following 145-residue polypeptide: D-aminoacyl-tRNA deacylase (145 aa).

A Gly-cisPro motif, important for rejection of L-amino acids motif is present at residues 137 to 138 (GP).

This sequence belongs to the DTD family. In terms of assembly, homodimer.

The protein resides in the cytoplasm. The catalysed reaction is glycyl-tRNA(Ala) + H2O = tRNA(Ala) + glycine + H(+). It carries out the reaction a D-aminoacyl-tRNA + H2O = a tRNA + a D-alpha-amino acid + H(+). Its function is as follows. An aminoacyl-tRNA editing enzyme that deacylates mischarged D-aminoacyl-tRNAs. Also deacylates mischarged glycyl-tRNA(Ala), protecting cells against glycine mischarging by AlaRS. Acts via tRNA-based rather than protein-based catalysis; rejects L-amino acids rather than detecting D-amino acids in the active site. By recycling D-aminoacyl-tRNA to D-amino acids and free tRNA molecules, this enzyme counteracts the toxicity associated with the formation of D-aminoacyl-tRNA entities in vivo and helps enforce protein L-homochirality. The sequence is that of D-aminoacyl-tRNA deacylase from Methylacidiphilum infernorum (isolate V4) (Methylokorus infernorum (strain V4)).